We begin with the raw amino-acid sequence, 118 residues long: Ribonuclease P protein component (118 aa).

It belongs to the RnpA family. Consists of a catalytic RNA component (M1 or rnpB) and a protein subunit.

The catalysed reaction is Endonucleolytic cleavage of RNA, removing 5'-extranucleotides from tRNA precursor.. RNaseP catalyzes the removal of the 5'-leader sequence from pre-tRNA to produce the mature 5'-terminus. It can also cleave other RNA substrates such as 4.5S RNA. The protein component plays an auxiliary but essential role in vivo by binding to the 5'-leader sequence and broadening the substrate specificity of the ribozyme. This is Ribonuclease P protein component from Shewanella oneidensis (strain ATCC 700550 / JCM 31522 / CIP 106686 / LMG 19005 / NCIMB 14063 / MR-1).